Reading from the N-terminus, the 259-residue chain is UPF0246 protein PSHAa2558 (259 aa).

This sequence belongs to the UPF0246 family.

The chain is UPF0246 protein PSHAa2558 from Pseudoalteromonas translucida (strain TAC 125).